The following is a 103-amino-acid chain: uncharacterized protein (103 aa).

The disordered stretch occupies residues 1-103; that stretch reads MAGARRRARC…WRGGSCTSQR (103 aa). Basic residues-rich tracts occupy residues 55–65 and 74–84; these read RRPGPGRRARS and RPPHSRTRARR.

This sequence belongs to the epstein-barr virus RPMS1 family.

This is an uncharacterized protein from Epstein-Barr virus (strain GD1) (HHV-4).